A 1174-amino-acid chain; its full sequence is Male determiner protein Mdmd(III) (1174 aa).

Basic and acidic residues predominate over residues 1–15 (MNATDAESRKPENKP). Disordered regions lie at residues 1–51 (MNAT…SGQR), 80–109 (KDGSNEMLPKEDSINTNHNYTTDSNEHPVE), and 136–259 (KQLS…LRRS). Over residues 16-35 (SSESSSSGSTSGSSDGEVSS) the composition is skewed to low complexity. Positions 36 to 47 (KTYFKNNKSKVL) are enriched in polar residues. Residues 80-92 (KDGSNEMLPKEDS) are compositionally biased toward basic and acidic residues. Residues 93 to 102 (INTNHNYTTD) show a composition bias toward polar residues. Residues 138 to 153 (LSAYRSRSRSTRLSYS) are compositionally biased toward low complexity. Residues 167–180 (SRYKKSVLRNRRTS) are compositionally biased toward basic residues. Positions 183 to 200 (HGRDSSTTKRSVSRDKDN) are enriched in basic and acidic residues. The span at 201 to 223 (RLRRRIGSSRSHTRSHSRFRRSE) shows a compositional bias: basic residues. The segment covering 235–259 (RSQERRHERRRSMSSDYERIALRRS) has biased composition (basic and acidic residues). Residues 348–531 (KKYIHGYINK…KVLFQVRRDG (184 aa)) enclose the MIF4G domain. Positions 641–757 (ALRRTIYLTL…SWDVLDCIKL (117 aa)) constitute an MI domain. Low complexity predominate over residues 840 to 857 (SAPSSSSSSSLSSELSAP). Disordered regions lie at residues 840 to 1045 (SAPS…SRTK) and 1096 to 1133 (KDNYGNRQNHEISQRHDSEIKRRREERKKRHHEKNHSR). The span at 869–909 (KKKHKGKNKKMTKKKNPSKKKEKTKKFVGKNKIAAKNKTIK) shows a compositional bias: basic residues. Residues 910–924 (RRTDKDNSSSKDNFL) are compositionally biased toward basic and acidic residues. The span at 926-957 (SESSSNESISLDSLSSELFAPSSYSSSESSND) shows a compositional bias: low complexity. A compositionally biased stretch (basic residues) spans 963–1001 (KHKGKNKKMTKKKNPSNKKEKTKKKLSKNKKAPNKNTKK). The span at 1010–1020 (SSESSISESKS) shows a compositional bias: low complexity. Over residues 1034–1045 (RKKRVTSKSRTK) the composition is skewed to basic residues. The span at 1103-1118 (QNHEISQRHDSEIKRR) shows a compositional bias: basic and acidic residues. The span at 1119 to 1130 (REERKKRHHEKN) shows a compositional bias: basic residues.

It belongs to the CWC22 family. As to quaternary structure, component of the spliceosome C complex.

The protein resides in the nucleus speckle. In terms of biological role, male determiner protein (M-factor) that controls male somatic sexual differentiation. Acts as a dominant factor that regulates the mRNA splicing of transformer (tra) and doublesex (dsx) transcripts and promotes expression of male splice forms of tra and dsx. Probably acts as a component of the spliceosome C complex required for mRNA splicing factor and exon-junction complex (EJC) assembly. Hinders eIF4AIII from non-specifically binding RNA and escorts it to the splicing machinery to promote EJC assembly on mature mRNAs. The polypeptide is Male determiner protein Mdmd(III) (Musca domestica (House fly)).